Here is a 244-residue protein sequence, read N- to C-terminus: Troponin I, cardiac muscle (244 aa).

Residues 1–25 are compositionally biased toward acidic residues; the sequence is MSDEEEVTYEEEEEEYVEEEEEEVV. Residues 1-67 form a disordered region; it reads MSDEEEVTYE…PQVKRKPKIS (67 aa). The residue at position 2 (serine 2) is an N-acetylserine. A Phosphoserine; by CK2 modification is found at serine 2. A compositionally biased stretch (pro residues) spans 27 to 42; that stretch reads PEPPKPAPPPAAPPPL.

This sequence belongs to the troponin I family. In terms of assembly, binds to actin and tropomyosin. In terms of tissue distribution, heart.

In terms of biological role, troponin I is the inhibitory subunit of troponin, the thin filament regulatory complex which confers calcium-sensitivity to striated muscle actomyosin ATPase activity. The chain is Troponin I, cardiac muscle (tnni3) from Xenopus laevis (African clawed frog).